The primary structure comprises 218 residues: ATP-dependent dethiobiotin synthetase BioD (218 aa).

Position 10–15 (10–15 (NAGKTT)) interacts with ATP. Thr-14 lines the Mg(2+) pocket. The active site involves Lys-35. A substrate-binding site is contributed by Thr-39. Mg(2+) is bound by residues His-52 and Glu-116. ATP is bound by residues 116-119 (EGAG) and 176-177 (LR).

This sequence belongs to the dethiobiotin synthetase family. In terms of assembly, homodimer. It depends on Mg(2+) as a cofactor.

The protein localises to the cytoplasm. The catalysed reaction is (7R,8S)-7,8-diammoniononanoate + CO2 + ATP = (4R,5S)-dethiobiotin + ADP + phosphate + 3 H(+). It participates in cofactor biosynthesis; biotin biosynthesis; biotin from 7,8-diaminononanoate: step 1/2. In terms of biological role, catalyzes a mechanistically unusual reaction, the ATP-dependent insertion of CO2 between the N7 and N8 nitrogen atoms of 7,8-diaminopelargonic acid (DAPA, also called 7,8-diammoniononanoate) to form a ureido ring. In Helicobacter pylori (strain Shi470), this protein is ATP-dependent dethiobiotin synthetase BioD.